We begin with the raw amino-acid sequence, 385 residues long: Heterogeneous nuclear ribonucleoprotein 87F (385 aa).

RRM domains are found at residues 24 to 101 (RKLF…RAVP) and 115 to 192 (KKLF…KAIA). Disordered regions lie at residues 192 to 289 (AKQD…WNGG) and 305 to 385 (GNGG…NRRY). 2 stretches are compositionally biased toward gly residues: residues 199–289 (QGGG…WNGG) and 305–317 (GNGGGGGGGGGFG). Positions 319–336 (EYQQSYGGGPQRNSNFGN) are enriched in polar residues. Composition is skewed to gly residues over residues 344–362 (QGGGGGGFNKGNQGGGQGF) and 369–385 (TGGGGQGGNMGGGNRRY).

It is found in the nucleus. The protein localises to the cytoplasm. In terms of biological role, this protein is a component of ribonucleosomes. Could be needed to organize a concentration gradient of a dorsalizing morphogen (Dm) originating in the germinal vesicle. The polypeptide is Heterogeneous nuclear ribonucleoprotein 87F (Hrb87F) (Drosophila melanogaster (Fruit fly)).